We begin with the raw amino-acid sequence, 437 residues long: Elongation factor 1-alpha (437 aa).

A tr-type G domain is found at 4-229 (KPHMNLVVIG…DQLQPPAKPV (226 aa)). Residues 13-20 (GHVDHGKS) are G1. 13 to 20 (GHVDHGKS) lines the GTP pocket. Position 20 (serine 20) interacts with Mg(2+). The interval 69 to 73 (GITID) is G2. A G3 region spans residues 90–93 (DAPG). GTP is bound by residues 90-94 (DAPGH) and 152-155 (NKMD). The tract at residues 152-155 (NKMD) is G4. A G5 region spans residues 193–195 (SAW).

Belongs to the TRAFAC class translation factor GTPase superfamily. Classic translation factor GTPase family. EF-Tu/EF-1A subfamily.

It is found in the cytoplasm. The enzyme catalyses GTP + H2O = GDP + phosphate + H(+). In terms of biological role, GTP hydrolase that promotes the GTP-dependent binding of aminoacyl-tRNA to the A-site of ribosomes during protein biosynthesis. The protein is Elongation factor 1-alpha of Aeropyrum pernix (strain ATCC 700893 / DSM 11879 / JCM 9820 / NBRC 100138 / K1).